Consider the following 330-residue polypeptide: RNA polymerase sigma factor RpoS (330 aa).

A sigma-70 factor domain-1 region spans residues 56-89; the sequence is DATQLYLGEIGYSPLLTAEEEVYFARRALRGDVA. The interval 94–164 is sigma-70 factor domain-2; sequence MIESNLRLVV…ERAIMNQTRT (71 aa). The short motif at 118-121 is the Interaction with polymerase core subunit RpoC element; sequence DLIE. Positions 174–249 are sigma-70 factor domain-3; the sequence is ELNVYLRTAR…DEKENGPEDT (76 aa). The tract at residues 262–315 is sigma-70 factor domain-4; the sequence is WLFELNAKQREVLARRFGLLGYEAATLEDVGREIGLTRERVRQIQVEGLRRLRE. The H-T-H motif DNA-binding region spans 288–307; sequence LEDVGREIGLTRERVRQIQV.

This sequence belongs to the sigma-70 factor family. RpoS subfamily. Interacts with the RNA polymerase core enzyme and RssB.

Its subcellular location is the cytoplasm. Functionally, sigma factors are initiation factors that promote the attachment of RNA polymerase to specific initiation sites and are then released. This sigma factor is the master transcriptional regulator of the stationary phase and the general stress response. Controls, positively or negatively, the expression of several hundred genes, which are mainly involved in metabolism, transport, regulation and stress management. In terms of biological role, protects stationary phase cells from killing induced by endoribonuclease MazF. The polypeptide is RNA polymerase sigma factor RpoS (Escherichia coli (strain K12)).